The primary structure comprises 162 residues: Peptidyl-prolyl cis-trans isomerase-like 1 (162 aa).

In terms of domain architecture, PPIase cyclophilin-type spans 1–155 (MATDVTFDTS…DEVKILRAKV (155 aa)).

This sequence belongs to the cyclophilin-type PPIase family. PPIL1 subfamily.

The enzyme catalyses [protein]-peptidylproline (omega=180) = [protein]-peptidylproline (omega=0). Functionally, PPIases accelerate the folding of proteins. It catalyzes the cis-trans isomerization of proline imidic peptide bonds in oligopeptides. In Emericella nidulans (strain FGSC A4 / ATCC 38163 / CBS 112.46 / NRRL 194 / M139) (Aspergillus nidulans), this protein is Peptidyl-prolyl cis-trans isomerase-like 1 (cyp1).